The primary structure comprises 224 residues: Cysteine S-methyltransferase NleE (224 aa).

Positions 49–52 are interaction with host proteins TAB2, TAB3 and ZRANB3; the sequence is GITR. 6 residues coordinate S-adenosyl-L-methionine: Ala-92, Ser-98, Arg-107, Gln-111, Tyr-204, and Glu-208.

Belongs to the NleE/OspZ family. Monomer.

The protein resides in the secreted. Its subcellular location is the host nucleus. The enzyme catalyses L-cysteinyl-[protein] + S-adenosyl-L-methionine = S-methyl-L-cysteinyl-[protein] + S-adenosyl-L-homocysteine + H(+). In terms of biological role, cysteine methyltransferase effector that inhibits host cell NF-kappa-B activation by preventing nuclear translocation of host protein RELA/p65. Acts by mediating cysteine methylation of host proteins TAB2 and TAB3: methylation of a conserved cysteine residue of the RanBP2-type zinc finger (NZF) of TAB2 and TAB3 disrupts zinc-binding, thereby inactivating the ubiquitin chain-binding activity of TAB2 and TAB3, leading to NF-kappa-B inactivation. Also mediates cysteine methylation of host protein ZRANB3, inactivating its ability to bind ubiquitin chains. The polypeptide is Cysteine S-methyltransferase NleE (Escherichia coli O127:H6 (strain E2348/69 / EPEC)).